A 536-amino-acid polypeptide reads, in one-letter code: Chaperonin GroEL (536 aa).

Residues T30–P33, D86–T90, G414, and D494 contribute to the ATP site.

It belongs to the chaperonin (HSP60) family. Forms a cylinder of 14 subunits composed of two heptameric rings stacked back-to-back. Interacts with the co-chaperonin GroES.

The protein localises to the cytoplasm. The enzyme catalyses ATP + H2O + a folded polypeptide = ADP + phosphate + an unfolded polypeptide.. Together with its co-chaperonin GroES, plays an essential role in assisting protein folding. The GroEL-GroES system forms a nano-cage that allows encapsulation of the non-native substrate proteins and provides a physical environment optimized to promote and accelerate protein folding. In Methanosarcina barkeri (strain Fusaro / DSM 804), this protein is Chaperonin GroEL.